Here is a 482-residue protein sequence, read N- to C-terminus: Protein translocase subunit SecY (482 aa).

The interval 1 to 22 is disordered; that stretch reads MVIKKPANKVDKKSTFKSSNKK. The next 10 helical transmembrane spans lie at 41–61, 92–112, 137–157, 177–197, 201–221, 243–263, 303–323, 342–362, 405–425, and 426–446; these read ILFTLLALIIIRLGVYITVPG, FSILALGVSPYITASIIVQLL, LTKIIMIPFALMQAEATIFTL, AFYYILIPLVMLGGSFFMLWI, ITIKGIGNGISIVIFIGIIIS, IFFSGLLNFMIYISVFLLVIL, VIPVIFASAIISTPITISQII, FNTWWGISIFGILIVLFTFLY, VVGSVFLAIIALLPYVISKLT, and QLPSNLAIGGTGLIICISVAI.

The protein belongs to the SecY/SEC61-alpha family. As to quaternary structure, component of the Sec protein translocase complex. Heterotrimer consisting of SecY, SecE and SecG subunits. The heterotrimers can form oligomers, although 1 heterotrimer is thought to be able to translocate proteins. Interacts with the ribosome. Interacts with SecDF, and other proteins may be involved. Interacts with SecA.

Its subcellular location is the cell membrane. In terms of biological role, the central subunit of the protein translocation channel SecYEG. Consists of two halves formed by TMs 1-5 and 6-10. These two domains form a lateral gate at the front which open onto the bilayer between TMs 2 and 7, and are clamped together by SecE at the back. The channel is closed by both a pore ring composed of hydrophobic SecY resides and a short helix (helix 2A) on the extracellular side of the membrane which forms a plug. The plug probably moves laterally to allow the channel to open. The ring and the pore may move independently. The sequence is that of Protein translocase subunit SecY from Mycoplasma capricolum subsp. capricolum (strain California kid / ATCC 27343 / NCTC 10154).